A 400-amino-acid polypeptide reads, in one-letter code: MKKDYYETLGVTRSSNKDDIKKAYRKLAVQYHPDKNPGNKEAEEHFKEVNEAYEVLSNDDKRRRYDQFGHAGVGSSAASGGGGAYAGGADFSDIFSAFNDMFTGGGARRGGSPFGGFEDAFGGGGGGGARRRASSGIHGTDLKIRLKLTLEEIAKGVEKTLKVKRQVPCEVCNGTGSKTGATETCQTCHGSGEVRQVSKTMFGQFVNIAACPTCGGEGRTIKERCTACYGEGIKLGETTVKINVPAGVENGNYMTMRGQGNAGPRGGAAGDLIVVFEEIHHETFTRNGHDVIYNLAVSYPDMVLGTKVEVPTLDGAVKLTIPAGTQPETMLRIQGHGIGHLKGGGRGDQYVKVNVFVPKEVSHQDKELLKDLRKSSNLCPNAHHDSESKSFFEKARDIFS.

One can recognise a J domain in the interval 4–69; it reads DYYETLGVTR…DKRRRYDQFG (66 aa). The CR-type zinc finger occupies 156–237; it reads GVEKTLKVKR…CYGEGIKLGE (82 aa). The Zn(2+) site is built by cysteine 169, cysteine 172, cysteine 185, cysteine 188, cysteine 211, cysteine 214, cysteine 225, and cysteine 228. CXXCXGXG motif repeat units lie at residues 169 to 176, 185 to 192, 211 to 218, and 225 to 232; these read CEVCNGTG, CQTCHGSG, CPTCGGEG, and CTACYGEG.

It belongs to the DnaJ family. Homodimer. Zn(2+) is required as a cofactor.

It localises to the cytoplasm. Functionally, participates actively in the response to hyperosmotic and heat shock by preventing the aggregation of stress-denatured proteins and by disaggregating proteins, also in an autonomous, DnaK-independent fashion. Unfolded proteins bind initially to DnaJ; upon interaction with the DnaJ-bound protein, DnaK hydrolyzes its bound ATP, resulting in the formation of a stable complex. GrpE releases ADP from DnaK; ATP binding to DnaK triggers the release of the substrate protein, thus completing the reaction cycle. Several rounds of ATP-dependent interactions between DnaJ, DnaK and GrpE are required for fully efficient folding. Also involved, together with DnaK and GrpE, in the DNA replication of plasmids through activation of initiation proteins. The polypeptide is Chaperone protein DnaJ (Chlorobium chlorochromatii (strain CaD3)).